A 195-amino-acid polypeptide reads, in one-letter code: N-(5'-phosphoribosyl)anthranilate isomerase (195 aa).

Belongs to the TrpF family.

It carries out the reaction N-(5-phospho-beta-D-ribosyl)anthranilate = 1-(2-carboxyphenylamino)-1-deoxy-D-ribulose 5-phosphate. Its pathway is amino-acid biosynthesis; L-tryptophan biosynthesis; L-tryptophan from chorismate: step 3/5. The protein is N-(5'-phosphoribosyl)anthranilate isomerase of Methanoregula boonei (strain DSM 21154 / JCM 14090 / 6A8).